A 443-amino-acid polypeptide reads, in one-letter code: ATP-dependent protease ATPase subunit HslU (443 aa).

ATP is bound by residues Ile-18, 60-65 (GVGKTE), Asp-256, Glu-321, and Arg-393.

This sequence belongs to the ClpX chaperone family. HslU subfamily. In terms of assembly, a double ring-shaped homohexamer of HslV is capped on each side by a ring-shaped HslU homohexamer. The assembly of the HslU/HslV complex is dependent on binding of ATP.

The protein localises to the cytoplasm. Functionally, ATPase subunit of a proteasome-like degradation complex; this subunit has chaperone activity. The binding of ATP and its subsequent hydrolysis by HslU are essential for unfolding of protein substrates subsequently hydrolyzed by HslV. HslU recognizes the N-terminal part of its protein substrates and unfolds these before they are guided to HslV for hydrolysis. This is ATP-dependent protease ATPase subunit HslU from Shigella boydii serotype 18 (strain CDC 3083-94 / BS512).